A 45-amino-acid polypeptide reads, in one-letter code: Large ribosomal subunit protein bL34 (45 aa).

This sequence belongs to the bacterial ribosomal protein bL34 family.

The chain is Large ribosomal subunit protein bL34 from Prochlorococcus marinus (strain MIT 9313).